Here is a 74-residue protein sequence, read N- to C-terminus: Small ribosomal subunit protein bS18 (74 aa).

This sequence belongs to the bacterial ribosomal protein bS18 family. As to quaternary structure, part of the 30S ribosomal subunit. Forms a tight heterodimer with protein bS6.

Binds as a heterodimer with protein bS6 to the central domain of the 16S rRNA, where it helps stabilize the platform of the 30S subunit. This Chlorobaculum tepidum (strain ATCC 49652 / DSM 12025 / NBRC 103806 / TLS) (Chlorobium tepidum) protein is Small ribosomal subunit protein bS18.